Reading from the N-terminus, the 392-residue chain is Nicotinate phosphoribosyltransferase (392 aa).

Histidine 216 carries the post-translational modification Phosphohistidine; by autocatalysis.

This sequence belongs to the NAPRTase family. Transiently phosphorylated on a His residue during the reaction cycle. Phosphorylation strongly increases the affinity for substrates and increases the rate of nicotinate D-ribonucleotide production. Dephosphorylation regenerates the low-affinity form of the enzyme, leading to product release.

The enzyme catalyses nicotinate + 5-phospho-alpha-D-ribose 1-diphosphate + ATP + H2O = nicotinate beta-D-ribonucleotide + ADP + phosphate + diphosphate. The protein operates within cofactor biosynthesis; NAD(+) biosynthesis; nicotinate D-ribonucleotide from nicotinate: step 1/1. Its function is as follows. Catalyzes the synthesis of beta-nicotinate D-ribonucleotide from nicotinate and 5-phospho-D-ribose 1-phosphate at the expense of ATP. In Cupriavidus necator (strain ATCC 17699 / DSM 428 / KCTC 22496 / NCIMB 10442 / H16 / Stanier 337) (Ralstonia eutropha), this protein is Nicotinate phosphoribosyltransferase.